We begin with the raw amino-acid sequence, 192 residues long: Ribosome maturation factor RimP (192 aa).

This sequence belongs to the RimP family.

Its subcellular location is the cytoplasm. Required for maturation of 30S ribosomal subunits. The sequence is that of Ribosome maturation factor RimP from Delftia acidovorans (strain DSM 14801 / SPH-1).